The sequence spans 186 residues: Phosphoprotein p30 (186 aa).

This sequence belongs to the asfivirus phosphoprotein p30 family. As to quaternary structure, oligomer. Interacts with host HNRNPK.

It is found in the host cytoplasm. Its subcellular location is the host nucleus. The protein resides in the virion. Its function is as follows. Modifies the subcellular distribution of heterogeneous nuclear ribonucleoprotein K (HNRNPK) and may contribute to modulate HNRNPK functions related to processing and export of mRNAs during ASFV infection. Necessary for virus internalization. The sequence is that of Phosphoprotein p30 from Ornithodoros (relapsing fever ticks).